The primary structure comprises 329 residues: D-alanine--D-alanine ligase (329 aa).

One can recognise an ATP-grasp domain in the interval 120-326 (KLWYDAIGIP…FHEFLADCIN (207 aa)). Residue 150–205 (AFDKWGKVFVKAARQGSSVGCYSVTNKQSVSQAVNDAFGYSEQVLVEKSVKPRELE) coordinates ATP. Mg(2+)-binding residues include Asp280, Glu293, and Asn295.

This sequence belongs to the D-alanine--D-alanine ligase family. It depends on Mg(2+) as a cofactor. Mn(2+) serves as cofactor.

Its subcellular location is the cytoplasm. It carries out the reaction 2 D-alanine + ATP = D-alanyl-D-alanine + ADP + phosphate + H(+). It functions in the pathway cell wall biogenesis; peptidoglycan biosynthesis. Its function is as follows. Cell wall formation. The sequence is that of D-alanine--D-alanine ligase from Vibrio campbellii (strain ATCC BAA-1116).